The following is a 333-amino-acid chain: Probable G-protein coupled receptor 33 (333 aa).

At 1–30 (MDLINSTDYLINASTLVRNSTQFLAPASKM) the chain is on the extracellular side. 3 N-linked (GlcNAc...) asparagine glycosylation sites follow: asparagine 5, asparagine 12, and asparagine 19. A helical transmembrane segment spans residues 31–53 (IIALSLYISSIIGTITNGLYLWV). Residues 54-64 (LRFKMKQTVNT) are Cytoplasmic-facing. The chain crosses the membrane as a helical span at residues 65 to 86 (LLFFHLILSYFISTMILPFMAT). At 87 to 103 (SQLQDNHWNFGTALCKV) the chain is on the extracellular side. Cysteines 101 and 179 form a disulfide. The helical transmembrane segment at 104-124 (FNGTLSLGMFTSVFFLSAIGL) threads the bilayer. Residues 125-143 (DRYLLTLHPVWSQQHRTPR) lie on the Cytoplasmic side of the membrane. A helical membrane pass occupies residues 144 to 165 (WASSIVLGVWISAAALSIPYLI). The Extracellular segment spans residues 166–209 (FRQTHHDRKGKVTCQNNYAVSTNWESKEMQALRQWIHVACFISR). The chain crosses the membrane as a helical span at residues 210 to 230 (FLLGFLLPFFIIIFCYERVAS). Over 231-246 (KVKERSLFKSSKPFKV) the chain is Cytoplasmic. A helical membrane pass occupies residues 247–268 (MMTAIISFFVCWMPYHIHQGLL). Residues 269–283 (LTMNQSLLLELTLIL) lie on the Extracellular side of the membrane. Residue asparagine 272 is glycosylated (N-linked (GlcNAc...) asparagine). A helical transmembrane segment spans residues 284–303 (TVLTTSFNTIFSPTLYLFVG). Residues 304 to 333 (ENFKKVFKKSILALFESTFSEDSSVERTQT) are Cytoplasmic-facing.

This sequence belongs to the G-protein coupled receptor 1 family.

The protein localises to the cell membrane. Functionally, orphan receptor; could be a chemoattractant receptor. This Pan paniscus (Pygmy chimpanzee) protein is Probable G-protein coupled receptor 33 (GPR33).